The following is a 352-amino-acid chain: Dolichol-phosphate mannosyltransferase (352 aa).

Topologically, residues 1–229 are cytoplasmic; it reads MKVSVIIPTY…HIYRLMKWEG (229 aa). The GDP-alpha-D-mannose site is built by Pro8, Tyr10, Glu12, Val37, Asp39, Asp89, Ala90, Asp91, Gln93, Arg117, Val156, Lys178, Arg202, and Lys208. Asp91 and Gln93 together coordinate Mg(2+). Residues Asp91 and Gln93 each contribute to the Mn(2+) site. A helical transmembrane segment spans residues 230 to 256; that stretch reads EIDRIVKFSIVGLSGILVNEGFLWLFV. Topologically, residues 257 to 261 are extracellular; it reads NLGIP. Residues 262–286 form a helical membrane-spanning segment; that stretch reads KEIAVIPAVELSILNNFFWNDIWTF. Residues 287 to 293 lie on the Cytoplasmic side of the membrane; the sequence is KDIRRGS. The helical transmembrane segment at 294-320 threads the bilayer; sequence IFSRLLKFHIAALSGAVVNFIVYWILL. The Extracellular portion of the chain corresponds to 321–325; the sequence is FLGIH. Residues 326 to 350 form a helical membrane-spanning segment; the sequence is YLIANLVGIVLSFGVRYVINRHVTW. The Cytoplasmic segment spans residues 351 to 352; it reads AT.

Belongs to the glycosyltransferase 2 family. Requires Mg(2+) as cofactor. The cofactor is Mn(2+). Ca(2+) serves as cofactor.

Its subcellular location is the cell membrane. The catalysed reaction is a di-trans,poly-cis-dolichyl phosphate + GDP-alpha-D-mannose = a di-trans,poly-cis-dolichyl beta-D-mannosyl phosphate + GDP. The protein operates within protein modification; protein glycosylation. Functionally, transfers mannose from GDP-mannose to dolichol monophosphate to form dolichol phosphate mannose (Dol-P-Man) which is the mannosyl donor in pathways leading to N-glycosylation, glycosyl phosphatidylinositol membrane anchoring, and O-mannosylation of proteins. The polypeptide is Dolichol-phosphate mannosyltransferase (Pyrococcus furiosus (strain ATCC 43587 / DSM 3638 / JCM 8422 / Vc1)).